We begin with the raw amino-acid sequence, 192 residues long: uncharacterized protein (192 aa).

The Nudix hydrolase domain occupies 29 to 160 (HRQAAVLIPI…PLDIYRRGDS (132 aa)). The short motif at 67–89 (GAVDDTDTSVIAAALREAEEEVA) is the Nudix box element. Mg(2+)-binding residues include glutamate 83 and glutamate 87.

It belongs to the Nudix hydrolase family. PCD1 subfamily. Mn(2+) is required as a cofactor. It depends on Mg(2+) as a cofactor.

Its function is as follows. Probably mediates the hydrolysis of some nucleoside diphosphate derivatives. This is an uncharacterized protein from Escherichia fergusonii (strain ATCC 35469 / DSM 13698 / CCUG 18766 / IAM 14443 / JCM 21226 / LMG 7866 / NBRC 102419 / NCTC 12128 / CDC 0568-73).